A 240-amino-acid chain; its full sequence is Ribonuclease PH (240 aa).

Phosphate is bound by residues Arg87 and Gly125 to Arg127.

Belongs to the RNase PH family. As to quaternary structure, homohexameric ring arranged as a trimer of dimers.

It carries out the reaction tRNA(n+1) + phosphate = tRNA(n) + a ribonucleoside 5'-diphosphate. In terms of biological role, phosphorolytic 3'-5' exoribonuclease that plays an important role in tRNA 3'-end maturation. Removes nucleotide residues following the 3'-CCA terminus of tRNAs; can also add nucleotides to the ends of RNA molecules by using nucleoside diphosphates as substrates, but this may not be physiologically important. Probably plays a role in initiation of 16S rRNA degradation (leading to ribosome degradation) during starvation. In Pseudomonas syringae pv. syringae (strain B728a), this protein is Ribonuclease PH.